A 218-amino-acid chain; its full sequence is Lipoprotein-releasing system ATP-binding protein LolD (218 aa).

In terms of domain architecture, ABC transporter spans 2–218 (IKLEGITKSF…HMVDGTIKKD (217 aa)). 34–41 (GPSGAGKT) is a binding site for ATP.

Belongs to the ABC transporter superfamily. Lipoprotein translocase (TC 3.A.1.125) family. As to quaternary structure, the complex is composed of two ATP-binding proteins (LolD) and two transmembrane proteins (LolC and LolE).

The protein resides in the cell inner membrane. Part of the ABC transporter complex LolCDE involved in the translocation of mature outer membrane-directed lipoproteins, from the inner membrane to the periplasmic chaperone, LolA. Responsible for the formation of the LolA-lipoprotein complex in an ATP-dependent manner. This is Lipoprotein-releasing system ATP-binding protein LolD from Bacteroides thetaiotaomicron (strain ATCC 29148 / DSM 2079 / JCM 5827 / CCUG 10774 / NCTC 10582 / VPI-5482 / E50).